Here is a 383-residue protein sequence, read N- to C-terminus: NIPA-like protein 2 (383 aa).

N-linked (GlcNAc...) asparagine glycans are attached at residues N23 and N33. A run of 7 helical transmembrane segments spans residues 46–66, 88–108, 110–130, 144–164, 177–197, 209–229, and 243–263; these read IHLF…ISLN, VLWW…FAAY, FAPI…SAII, LLGT…APNI, LVGW…CILL, VILL…VKAV, and LTYP…VFQV. N274 is a glycosylation site (N-linked (GlcNAc...) asparagine). Transmembrane regions (helical) follow at residues 278–298 and 306–326; these read VVPV…IIFY and FLTV…VFLV. The interval 355-383 is disordered; it reads QPDSHSLSYGTLPDGSDSTKSQSGEKKEV.

It belongs to the NIPA family.

The protein localises to the membrane. This is NIPA-like protein 2 (NIPAL2) from Homo sapiens (Human).